The following is a 102-amino-acid chain: NADH-quinone oxidoreductase subunit K (102 aa).

Helical transmembrane passes span 6 to 26 (ATHF…GVLT), 31 to 51 (LVIF…LIGF), and 62 to 82 (VFAL…LGIV).

This sequence belongs to the complex I subunit 4L family. NDH-1 is composed of 14 different subunits. Subunits NuoA, H, J, K, L, M, N constitute the membrane sector of the complex.

The protein resides in the cell membrane. The enzyme catalyses a quinone + NADH + 5 H(+)(in) = a quinol + NAD(+) + 4 H(+)(out). In terms of biological role, NDH-1 shuttles electrons from NADH, via FMN and iron-sulfur (Fe-S) centers, to quinones in the respiratory chain. The immediate electron acceptor for the enzyme in this species is believed to be ubiquinone. Couples the redox reaction to proton translocation (for every two electrons transferred, four hydrogen ions are translocated across the cytoplasmic membrane), and thus conserves the redox energy in a proton gradient. This chain is NADH-quinone oxidoreductase subunit K, found in Thermomicrobium roseum (strain ATCC 27502 / DSM 5159 / P-2).